A 429-amino-acid chain; its full sequence is UDP-N-acetylglucosamine 1-carboxyvinyltransferase (429 aa).

Residue 22–23 participates in phosphoenolpyruvate binding; that stretch reads KN. Arg-102 contributes to the UDP-N-acetyl-alpha-D-glucosamine binding site. Residue Cys-126 is the Proton donor of the active site. Cys-126 is subject to 2-(S-cysteinyl)pyruvic acid O-phosphothioketal. Residues 131 to 135, Asp-316, and Ile-338 each bind UDP-N-acetyl-alpha-D-glucosamine; that span reads RPVDL.

This sequence belongs to the EPSP synthase family. MurA subfamily.

The protein resides in the cytoplasm. It catalyses the reaction phosphoenolpyruvate + UDP-N-acetyl-alpha-D-glucosamine = UDP-N-acetyl-3-O-(1-carboxyvinyl)-alpha-D-glucosamine + phosphate. Its pathway is cell wall biogenesis; peptidoglycan biosynthesis. Cell wall formation. Adds enolpyruvyl to UDP-N-acetylglucosamine. This Methylorubrum extorquens (strain CM4 / NCIMB 13688) (Methylobacterium extorquens) protein is UDP-N-acetylglucosamine 1-carboxyvinyltransferase.